We begin with the raw amino-acid sequence, 343 residues long: F17g-G fimbrial adhesin (343 aa).

Positions 1–22 are cleaved as a signal peptide; that stretch reads MTNFYKVCLAVFILVCCNISHA. Positions 23 to 199 are receptor-binding lectin domain; it reads AVSFIGSTEN…LNPFTLNDTV (177 aa). Residues 65–66, 110–111, and 138–141 contribute to the a carbohydrate site; these read AN, DT, and STQG. Cysteines 75 and 132 form a disulfide. Positions 200 to 343 are fimbrillin-binding domain; the sequence is TSCRLLTPSA…GISTFTFSYQ (144 aa). The disordered stretch occupies residues 287-307; it reads LKFGPDSPVKGNENQWQLSTG. Positions 298-307 are enriched in polar residues; that stretch reads NENQWQLSTG.

It belongs to the fimbrial protein family.

Its subcellular location is the fimbrium. Its function is as follows. Essential fimbrial adhesion factor that mediates binding to N-acetylglucosamine-containing receptors in the host intestinal microvilli, leading to colonization of the intestinal tissue, and diarrhea or septicemia. Also confers adhesiveness to laminin and basement membranes. May be involved in the initiation of polymerization of fimbrillin monomers during fimbrial filament biogenesis. The protein is F17g-G fimbrial adhesin (f17gG) of Escherichia coli.